Reading from the N-terminus, the 402-residue chain is Phosphopentomutase (402 aa).

Positions 10, 301, 306, 342, 343, and 354 each coordinate Mn(2+).

It belongs to the phosphopentomutase family. Requires Mn(2+) as cofactor.

The protein resides in the cytoplasm. It catalyses the reaction 2-deoxy-alpha-D-ribose 1-phosphate = 2-deoxy-D-ribose 5-phosphate. It carries out the reaction alpha-D-ribose 1-phosphate = D-ribose 5-phosphate. Its pathway is carbohydrate degradation; 2-deoxy-D-ribose 1-phosphate degradation; D-glyceraldehyde 3-phosphate and acetaldehyde from 2-deoxy-alpha-D-ribose 1-phosphate: step 1/2. In terms of biological role, isomerase that catalyzes the conversion of deoxy-ribose 1-phosphate (dRib-1-P) and ribose 1-phosphate (Rib-1-P) to deoxy-ribose 5-phosphate (dRib-5-P) and ribose 5-phosphate (Rib-5-P), respectively. This chain is Phosphopentomutase, found in Aeromonas salmonicida (strain A449).